We begin with the raw amino-acid sequence, 351 residues long: Phosphate acyltransferase (351 aa).

This sequence belongs to the PlsX family. Homodimer. Probably interacts with PlsY.

It localises to the cytoplasm. The enzyme catalyses a fatty acyl-[ACP] + phosphate = an acyl phosphate + holo-[ACP]. It functions in the pathway lipid metabolism; phospholipid metabolism. Catalyzes the reversible formation of acyl-phosphate (acyl-PO(4)) from acyl-[acyl-carrier-protein] (acyl-ACP). This enzyme utilizes acyl-ACP as fatty acyl donor, but not acyl-CoA. This chain is Phosphate acyltransferase, found in Gloeothece citriformis (strain PCC 7424) (Cyanothece sp. (strain PCC 7424)).